The sequence spans 63 residues: Protein Wfdc21 (63 aa).

An N-terminal signal peptide occupies residues 1 to 24 (MKLGAFLLLVSLITLSLEVQELQA). The region spanning 25–63 (AVRPLQLLGTCAELCRGDWDCGPEEQCVSIGCSHICTTN) is the WAP; atypical domain. 3 disulfide bridges follow: cysteine 35–cysteine 56, cysteine 39–cysteine 51, and cysteine 45–cysteine 60.

As to expression, predominantly expressed in white adipose tissue and liver.

It localises to the secreted. May promote activation of the metalloproteinase MMP2. In Mus musculus (Mouse), this protein is Protein Wfdc21.